A 230-amino-acid chain; its full sequence is UPF0758 protein plu4865 (230 aa).

One can recognise an MPN domain in the interval Ile-108–Ile-230. Zn(2+)-binding residues include His-179, His-181, and Asp-192. The JAMM motif signature appears at His-179 to Asp-192.

Belongs to the UPF0758 family. YicR subfamily.

This Photorhabdus laumondii subsp. laumondii (strain DSM 15139 / CIP 105565 / TT01) (Photorhabdus luminescens subsp. laumondii) protein is UPF0758 protein plu4865.